A 2003-amino-acid chain; its full sequence is Neurogenic locus notch homolog protein 4 (2003 aa).

An N-terminal signal peptide occupies residues 1 to 23 (MQPPSLLLLLLLLLLLCVSVVRP). 4 EGF-like domains span residues 24–63 (RGLL…ETCQ), 64–115 (FPDP…ERCQ), 118–155 (LEDP…EQCQ), and 156–192 (LRDF…HACE). Residues 24–1447 (RGLLCGSFPE…TAPPANQLPW (1424 aa)) are Extracellular-facing. 48 disulfide bridges follow: Cys-28-Cys-41, Cys-35-Cys-51, Cys-53-Cys-62, Cys-68-Cys-80, Cys-74-Cys-103, Cys-105-Cys-114, Cys-122-Cys-133, Cys-127-Cys-143, Cys-145-Cys-154, Cys-160-Cys-171, Cys-165-Cys-180, Cys-182-Cys-191, Cys-198-Cys-211, Cys-205-Cys-220, Cys-222-Cys-231, Cys-238-Cys-249, Cys-243-Cys-262, Cys-264-Cys-273, Cys-280-Cys-291, Cys-285-Cys-300, Cys-302-Cys-311, Cys-318-Cys-332, Cys-326-Cys-341, Cys-343-Cys-352, Cys-359-Cys-370, Cys-364-Cys-379, Cys-381-Cys-390, Cys-396-Cys-407, Cys-401-Cys-418, Cys-420-Cys-429, Cys-436-Cys-452, Cys-446-Cys-461, Cys-463-Cys-472, Cys-479-Cys-490, Cys-484-Cys-499, Cys-501-Cys-510, Cys-517-Cys-528, Cys-522-Cys-537, Cys-539-Cys-548, Cys-555-Cys-566, Cys-560-Cys-575, Cys-577-Cys-586, Cys-593-Cys-604, Cys-598-Cys-613, Cys-615-Cys-624, Cys-629-Cys-640, Cys-634-Cys-649, and Cys-651-Cys-658. An EGF-like 5; calcium-binding domain is found at 194-232 (DVNECFQDPGPCPKGTSCHNTLGSFQCLCPVGQEGPRCE). One can recognise an EGF-like 6 domain in the interval 234 to 274 (RAGPCPPRGCSNGGTCQLMPEKDSTFHLCLCPPGFIGPDCE). One can recognise an EGF-like 7; calcium-binding domain in the interval 276–312 (NPDNCVSHQCQNGGTCQDGLDTYTCLCPETWTGWDCS). Residues 314-353 (DVDECETQGPPHCRNGGTCQNSAGSFHCVCVSGWGGTSCE) form the EGF-like 8; calcium-binding domain. In terms of domain architecture, EGF-like 9; calcium-binding spans 355–391 (NLDDCIAATCAPGSTCIDRVGSFSCLCPPGRTGLLCH). Residues 392 to 430 (LEDMCLSQPCHGDAQCSTNPLTGSTLCLCQPGYSGPTCH) enclose the EGF-like 10 domain. An EGF-like 11; calcium-binding domain is found at 432–473 (DLDECLMAQQGPSPCEHGGSCLNTPGSFNCLCPPGYTGSRCE). The EGF-like 12; calcium-binding domain maps to 475–511 (DHNECLSQPCHPGSTCLDLLATFHCLCPPGLEGQLCE). One can recognise an EGF-like 13; calcium-binding domain in the interval 513 to 549 (ETNECASAPCLNHADCHDLLNGFQCICLPGFSGTRCE). The 37-residue stretch at 551 to 587 (DIDECRSSPCANGGQCQDQPGAFHCKCLPGFEGPRCQ) folds into the EGF-like 14; calcium-binding domain. The EGF-like 15; calcium-binding domain occupies 589–625 (EVDECLSDPCPVGASCLDLPGAFFCLCPSGFTGQLCE). EGF-like domains are found at residues 626 to 659 (VPLC…PGCA), 661 to 689 (PEDN…PECE), 691 to 727 (ELGG…PTCS), 729 to 765 (EMTA…PQCQ), 767 to 803 (STDY…PRCE), 806 to 842 (LRPS…GSCQ), 844 to 880 (LMDL…PLCN), 882 to 928 (PLSS…SLCQ), 930 to 966 (HVNP…QNCS), 968 to 1004 (ELDA…LRCE), 1006 to 1044 (DVDE…QWCE), 1046 to 1085 (EIDP…PTCS), 1087 to 1126 (RAPS…PDCL), and 1130 to 1171 (APKG…PRCQ). The N-linked (GlcNAc...) asparagine glycan is linked to Asn-664. Intrachain disulfides connect Cys-665–Cys-672, Cys-667–Cys-677, Cys-679–Cys-688, Cys-695–Cys-706, Cys-700–Cys-715, Cys-717–Cys-726, Cys-733–Cys-744, Cys-738–Cys-753, Cys-755–Cys-764, Cys-771–Cys-782, Cys-776–Cys-791, Cys-793–Cys-802, Cys-810–Cys-821, Cys-815–Cys-830, Cys-832–Cys-841, Cys-848–Cys-859, Cys-853–Cys-868, Cys-870–Cys-879, Cys-886–Cys-907, Cys-901–Cys-916, Cys-918–Cys-927, Cys-934–Cys-945, Cys-939–Cys-954, Cys-956–Cys-965, Cys-972–Cys-983, Cys-977–Cys-992, Cys-994–Cys-1003, Cys-1010–Cys-1023, Cys-1015–Cys-1032, Cys-1034–Cys-1043, Cys-1050–Cys-1061, Cys-1055–Cys-1073, Cys-1075–Cys-1084, Cys-1091–Cys-1102, Cys-1096–Cys-1114, Cys-1116–Cys-1125, Cys-1134–Cys-1146, Cys-1140–Cys-1159, Cys-1161–Cys-1170, Cys-1178–Cys-1191, Cys-1187–Cys-1203, Cys-1214–Cys-1238, Cys-1220–Cys-1233, Cys-1229–Cys-1245, Cys-1251–Cys-1277, Cys-1259–Cys-1272, and Cys-1268–Cys-1284. N-linked (GlcNAc...) asparagine glycosylation is present at Asn-714. An N-linked (GlcNAc...) asparagine glycan is attached at Asn-964. The N-linked (GlcNAc...) asparagine glycan is linked to Asn-1143. LNR repeat units lie at residues 1170 to 1213 (CQKP…PWKG), 1214 to 1250 (CPSH…TPPA), and 1251 to 1294 (CTPA…PEWG). Positions 1347–1371 (AEEKLGGTRDPTYQERAAPQTQPLG) are disordered. Residues 1448 to 1468 (PVLCSPVAGVILLALGALLVL) traverse the membrane as a helical segment. Residues 1469-2003 (QLIRRRRREH…PINQGGEGKK (535 aa)) are Cytoplasmic-facing. The disordered stretch occupies residues 1485 to 1508 (PGFTRRPRTQSAPHRRRPPLGEDS). The segment covering 1489-1502 (RRPRTQSAPHRRRP) has biased composition (basic residues). 5 ANK repeats span residues 1633-1665 (TGET…QPDR), 1666-1698 (AGRT…DART), 1700-1732 (DGTT…ARDK), 1733-1765 (WGKT…AQDN), and 1766-1798 (REQT…LRDQ). 2 disordered regions span residues 1900–1927 (LSGV…RPNP) and 1968–2003 (PPPC…EGKK).

Belongs to the NOTCH family. Heterodimer of a C-terminal fragment N(TM) and a N-terminal fragment N(EC) which are probably linked by disulfide bonds. Interacts with MAML1, MAML2 and MAML3 which act as transcriptional coactivators for NOTCH4. As to quaternary structure, (Microbial infection) Interacts with Epstein-Barr virus (EBV) RK-BARF0. In terms of processing, synthesized in the endoplasmic reticulum as an inactive form which is proteolytically cleaved by a furin-like convertase in the trans-Golgi network before it reaches the plasma membrane to yield an active, ligand-accessible form. Cleavage results in a C-terminal fragment N(TM) and a N-terminal fragment N(EC). Following ligand binding, it is cleaved by TNF-alpha converting enzyme (TACE) to yield a membrane-associated intermediate fragment called notch extracellular truncation (NEXT). This fragment is then cleaved by presenilin dependent gamma-secretase to release a notch-derived peptide containing the intracellular domain (NICD) from the membrane. Post-translationally, phosphorylated. Highly expressed in the heart, moderately in the lung and placenta and at low levels in the liver, skeletal muscle, kidney, pancreas, spleen, lymph node, thymus, bone marrow and fetal liver. No expression was seen in adult brain or peripheral blood leukocytes.

It localises to the cell membrane. The protein resides in the nucleus. Its function is as follows. Functions as a receptor for membrane-bound ligands Jagged1, Jagged2 and Delta1 to regulate cell-fate determination. Upon ligand activation through the released notch intracellular domain (NICD) it forms a transcriptional activator complex with RBPJ/RBPSUH and activates genes of the enhancer of split locus. Affects the implementation of differentiation, proliferation and apoptotic programs. May regulate branching morphogenesis in the developing vascular system. The polypeptide is Neurogenic locus notch homolog protein 4 (Homo sapiens (Human)).